We begin with the raw amino-acid sequence, 352 residues long: MIGKRFFQTTSKKIAFAFDIDGVLFRGKKPIAGASDALKLLNRNKIPYILLTNGGGFSERARTEFISSKLDVDVSPLQIIQSHTPYKSLVNKYSRILAVGTPSVRGVAEGYGFQDVVHQTDIVRYNRDIAPFSGLSDEQVMEYSRDIPDLTTKKFDAVLVFNDPHDWAADIQIISDAINSENGMLNTLRNEKSGKPSIPIYFSNQDLLWANPYKLNRFGQGAFRLLVRRLYLELNGEPLQDYTLGKPTKLTYDFAHHVLIDWEKRLSGKIGQSVKQKLPLLGTKPSTSPFHAVFMVGDNPASDIIGAQNYGWNSCLVKTGVYNEGDDLKECKPTLIVNDVFDAVTKTLEKYA.

It belongs to the HAD-like hydrolase superfamily.

Its subcellular location is the mitochondrion. The chain is Mitochondrial hydrolase YKR070W from Saccharomyces cerevisiae (strain ATCC 204508 / S288c) (Baker's yeast).